The chain runs to 331 residues: Nodulation protein D 2 (331 aa).

The HTH lysR-type domain maps to 6–63 (LDLNLLVALDALMTERSLTAAARKINLSQPAMSAAVARLRSYFRDELFAMRGRKLVPT). The H-T-H motif DNA-binding region spans 23–42 (LTAAARKINLSQPAMSAAVA).

Belongs to the LysR transcriptional regulatory family.

In terms of biological role, nodD regulates the expression of the nodABCFE genes which encode other nodulation proteins. NodD is also a negative regulator of its own expression. Binds flavonoids as inducers. This chain is Nodulation protein D 2 (nodD2), found in Bradyrhizobium elkanii.